A 73-amino-acid polypeptide reads, in one-letter code: Cell division protein ZapB (73 aa).

A coiled-coil region spans residues 3–69 (LELLSKLETK…EKVTGLVGLL (67 aa)). The interval 30-50 (EKQKSSTLSEHNQQLNEQNQQ) is disordered. Residues 41–50 (NQQLNEQNQQ) are compositionally biased toward low complexity.

This sequence belongs to the ZapB family. As to quaternary structure, homodimer. The ends of the coiled-coil dimer bind to each other, forming polymers. Interacts with FtsZ.

The protein localises to the cytoplasm. Non-essential, abundant cell division factor that is required for proper Z-ring formation. It is recruited early to the divisome by direct interaction with FtsZ, stimulating Z-ring assembly and thereby promoting cell division earlier in the cell cycle. Its recruitment to the Z-ring requires functional FtsA or ZipA. This chain is Cell division protein ZapB, found in Shewanella putrefaciens (strain CN-32 / ATCC BAA-453).